Here is a 473-residue protein sequence, read N- to C-terminus: Mitochondrial distribution and morphology protein 10 (473 aa).

The protein belongs to the MDM10 family. Component of the ER-mitochondria encounter structure (ERMES) or MDM complex, composed of MMM1, MDM10, MDM12 and MDM34. Associates with the mitochondrial outer membrane sorting assembly machinery SAM(core) complex.

The protein localises to the mitochondrion outer membrane. Component of the ERMES/MDM complex, which serves as a molecular tether to connect the endoplasmic reticulum and mitochondria. Components of this complex are involved in the control of mitochondrial shape and protein biogenesis and may function in phospholipid exchange. MDM10 is involved in the late assembly steps of the general translocase of the mitochondrial outer membrane (TOM complex). Functions in the TOM40-specific route of the assembly of outer membrane beta-barrel proteins, including the association of TOM40 with the receptor TOM22 and small TOM proteins. Can associate with the SAM(core) complex as well as the MDM12-MMM1 complex, both involved in late steps of the major beta-barrel assembly pathway, that is responsible for biogenesis of all outer membrane beta-barrel proteins. May act as a switch that shuttles between both complexes and channels precursor proteins into the TOM40-specific pathway. Plays a role in mitochondrial morphology and in the inheritance of mitochondria. The sequence is that of Mitochondrial distribution and morphology protein 10 from Candida albicans (strain WO-1) (Yeast).